The following is an 83-amino-acid chain: Cytochrome c oxidase subunit 7A2, mitochondrial (83 aa).

The transit peptide at 1-23 (MLRNVLALRQIAQRTISTTSRRH) directs the protein to the mitochondrion. Topologically, residues 24 to 48 (FENKVPEKQKLFQEDNGMPVHLKGG) are mitochondrial matrix. N6-acetyllysine is present on K33. Residues 49–77 (TSDALLYRATMLLTVGGTAYAIYMLAMAA) form a helical membrane-spanning segment. The Mitochondrial intermembrane portion of the chain corresponds to 78-83 (FPKKQN).

This sequence belongs to the cytochrome c oxidase VIIa family. In terms of assembly, component of the cytochrome c oxidase (complex IV, CIV), a multisubunit enzyme composed of 14 subunits. The complex is composed of a catalytic core of 3 subunits MT-CO1, MT-CO2 and MT-CO3, encoded in the mitochondrial DNA, and 11 supernumerary subunits COX4I, COX5A, COX5B, COX6A, COX6B, COX6C, COX7A, COX7B, COX7C, COX8 and NDUFA4, which are encoded in the nuclear genome. The complex exists as a monomer or a dimer and forms supercomplexes (SCs) in the inner mitochondrial membrane with NADH-ubiquinone oxidoreductase (complex I, CI) and ubiquinol-cytochrome c oxidoreductase (cytochrome b-c1 complex, complex III, CIII), resulting in different assemblies (supercomplex SCI(1)III(2)IV(1) and megacomplex MCI(2)III(2)IV(2)). Interacts with PET100.

The protein localises to the mitochondrion inner membrane. The protein operates within energy metabolism; oxidative phosphorylation. Its function is as follows. Component of the cytochrome c oxidase, the last enzyme in the mitochondrial electron transport chain which drives oxidative phosphorylation. The respiratory chain contains 3 multisubunit complexes succinate dehydrogenase (complex II, CII), ubiquinol-cytochrome c oxidoreductase (cytochrome b-c1 complex, complex III, CIII) and cytochrome c oxidase (complex IV, CIV), that cooperate to transfer electrons derived from NADH and succinate to molecular oxygen, creating an electrochemical gradient over the inner membrane that drives transmembrane transport and the ATP synthase. Cytochrome c oxidase is the component of the respiratory chain that catalyzes the reduction of oxygen to water. Electrons originating from reduced cytochrome c in the intermembrane space (IMS) are transferred via the dinuclear copper A center (CU(A)) of subunit 2 and heme A of subunit 1 to the active site in subunit 1, a binuclear center (BNC) formed by heme A3 and copper B (CU(B)). The BNC reduces molecular oxygen to 2 water molecules using 4 electrons from cytochrome c in the IMS and 4 protons from the mitochondrial matrix. This chain is Cytochrome c oxidase subunit 7A2, mitochondrial (Cox7a2), found in Rattus norvegicus (Rat).